A 71-amino-acid chain; its full sequence is Cell division protein FtsB (71 aa).

The Cytoplasmic segment spans residues 1–3 (MKI). The chain crosses the membrane as a helical span at residues 4–21 (LKIFLLSLLFWLQYSLWF). Residues 22 to 71 (GKNGVLDFIKIYRRVTIEKKNNEYLDMRNNQIILEIENFNNHINKDKKKT) are Extracellular-facing.

This sequence belongs to the FtsB family.

Its subcellular location is the cell membrane. In terms of biological role, essential cell division protein. May link together the upstream cell division proteins, which are predominantly cytoplasmic, with the downstream cell division proteins, which are predominantly extracellular. The polypeptide is Cell division protein FtsB (Buchnera aphidicola subsp. Acyrthosiphon pisum (strain APS) (Acyrthosiphon pisum symbiotic bacterium)).